Reading from the N-terminus, the 130-residue chain is Bet1-like SNARE 1-2 (130 aa).

The Cytoplasmic segment spans residues 1–106 (MNFRRENRAS…EKKSNRKSCK (106 aa)). A t-SNARE coiled-coil homology domain is found at 33 to 95 (AHDERDNDEA…SGTINRFKLV (63 aa)). Positions 40 to 82 (DEALENLQDRVSFLKRVTGDIHEEVENHNRLLDKVGNKMDSAR) form a coiled coil. The helical; Anchor for type IV membrane protein transmembrane segment at 107–122 (LIAYFVLLFLIMYYLI) threads the bilayer. Residues 123-130 (RLLNYIKG) lie on the Vesicular side of the membrane.

It belongs to the BET1 family.

It localises to the golgi apparatus membrane. The protein resides in the endoplasmic reticulum membrane. Required for vesicular transport from the ER to the Golgi complex. Functions as a SNARE associated with ER-derived vesicles. This chain is Bet1-like SNARE 1-2 (BET12), found in Arabidopsis thaliana (Mouse-ear cress).